We begin with the raw amino-acid sequence, 210 residues long: Isochorismatase domain-containing protein 2B (210 aa).

Lysine 178 carries the N6-succinyllysine modification.

This sequence belongs to the isochorismatase family. As to quaternary structure, interacts with CDKN2A. Ubiquitous. Expressed predominantly in uterus, stomach and urinary tract.

The protein localises to the cytoplasm. It localises to the nucleus. The polypeptide is Isochorismatase domain-containing protein 2B (Isoc2b) (Mus musculus (Mouse)).